Consider the following 631-residue polypeptide: Phosphomethylpyrimidine synthase (631 aa).

The interval Thr54 to Tyr80 is disordered. Over residues Gly58–Thr67 the composition is skewed to basic and acidic residues. Substrate contacts are provided by residues Asn239, Met268, Tyr297, His333, Ser353–Gly355, Asp394–Arg397, and Glu433. His437 is a Zn(2+) binding site. Tyr460 contacts substrate. His501 lines the Zn(2+) pocket. [4Fe-4S] cluster contacts are provided by Cys581, Cys584, and Cys589.

This sequence belongs to the ThiC family. As to quaternary structure, homodimer. It depends on [4Fe-4S] cluster as a cofactor.

The enzyme catalyses 5-amino-1-(5-phospho-beta-D-ribosyl)imidazole + S-adenosyl-L-methionine = 4-amino-2-methyl-5-(phosphooxymethyl)pyrimidine + CO + 5'-deoxyadenosine + formate + L-methionine + 3 H(+). The protein operates within cofactor biosynthesis; thiamine diphosphate biosynthesis. Catalyzes the synthesis of the hydroxymethylpyrimidine phosphate (HMP-P) moiety of thiamine from aminoimidazole ribotide (AIR) in a radical S-adenosyl-L-methionine (SAM)-dependent reaction. This is Phosphomethylpyrimidine synthase from Klebsiella pneumoniae subsp. pneumoniae (strain ATCC 700721 / MGH 78578).